A 64-amino-acid chain; its full sequence is Large ribosomal subunit protein bL35 (64 aa).

The interval 19 to 44 (TGKLKASRPGRRHKLTGKTPKRKRQL) is disordered. The span at 23–44 (KASRPGRRHKLTGKTPKRKRQL) shows a compositional bias: basic residues.

This sequence belongs to the bacterial ribosomal protein bL35 family.

This is Large ribosomal subunit protein bL35 from Protochlamydia amoebophila (strain UWE25).